The chain runs to 211 residues: Outer-membrane lipoprotein carrier protein (211 aa).

Residues 1–24 (MRNRILVSACAALAMFAMQAPAHA) form the signal peptide.

The protein belongs to the LolA family. As to quaternary structure, monomer.

The protein localises to the periplasm. Its function is as follows. Participates in the translocation of lipoproteins from the inner membrane to the outer membrane. Only forms a complex with a lipoprotein if the residue after the N-terminal Cys is not an aspartate (The Asp acts as a targeting signal to indicate that the lipoprotein should stay in the inner membrane). This is Outer-membrane lipoprotein carrier protein from Cupriavidus taiwanensis (strain DSM 17343 / BCRC 17206 / CCUG 44338 / CIP 107171 / LMG 19424 / R1) (Ralstonia taiwanensis (strain LMG 19424)).